A 218-amino-acid polypeptide reads, in one-letter code: Ribonuclease HII (218 aa).

The RNase H type-2 domain occupies 22 to 211 (VRIAGVDEAG…VRAALESRFS (190 aa)). A divalent metal cation contacts are provided by Asp-28, Glu-29, and Asp-119.

Belongs to the RNase HII family. Mn(2+) is required as a cofactor. Requires Mg(2+) as cofactor.

It is found in the cytoplasm. It catalyses the reaction Endonucleolytic cleavage to 5'-phosphomonoester.. Its function is as follows. Endonuclease that specifically degrades the RNA of RNA-DNA hybrids. The sequence is that of Ribonuclease HII from Maricaulis maris (strain MCS10) (Caulobacter maris).